A 263-amino-acid polypeptide reads, in one-letter code: Type III pantothenate kinase (263 aa).

9–16 contributes to the ATP binding site; it reads DIGNTNVK. Residues Tyr103 and 110–113 each bind substrate; that span reads GADR. The active-site Proton acceptor is Asp112. Asp134 is a binding site for K(+). An ATP-binding site is contributed by Thr137. Residue Thr190 coordinates substrate.

Belongs to the type III pantothenate kinase family. In terms of assembly, homodimer. The cofactor is NH4(+). Requires K(+) as cofactor.

It is found in the cytoplasm. It carries out the reaction (R)-pantothenate + ATP = (R)-4'-phosphopantothenate + ADP + H(+). It participates in cofactor biosynthesis; coenzyme A biosynthesis; CoA from (R)-pantothenate: step 1/5. Catalyzes the phosphorylation of pantothenate (Pan), the first step in CoA biosynthesis. This chain is Type III pantothenate kinase, found in Oleidesulfovibrio alaskensis (strain ATCC BAA-1058 / DSM 17464 / G20) (Desulfovibrio alaskensis).